Consider the following 1067-residue polypeptide: Probable isoleucine--tRNA ligase, cytoplasmic (1067 aa).

The short motif at Pro-47 to His-57 is the 'HIGH' region element. Residues Lys-604 to Arg-608 carry the 'KMSKS' region motif. Lys-607 serves as a coordination point for ATP.

The protein belongs to the class-I aminoacyl-tRNA synthetase family.

The protein resides in the cytoplasm. It carries out the reaction tRNA(Ile) + L-isoleucine + ATP = L-isoleucyl-tRNA(Ile) + AMP + diphosphate. In Dictyostelium discoideum (Social amoeba), this protein is Probable isoleucine--tRNA ligase, cytoplasmic (ileS).